Here is an 88-residue protein sequence, read N- to C-terminus: Small ribosomal subunit protein uS15c (88 aa).

This sequence belongs to the universal ribosomal protein uS15 family. In terms of assembly, part of the 30S ribosomal subunit.

It is found in the plastid. Its subcellular location is the chloroplast. This Barbarea verna (Land cress) protein is Small ribosomal subunit protein uS15c (rps15).